Reading from the N-terminus, the 2485-residue chain is Probable polyketide synthase 10 (2485 aa).

Residues 8 to 447 enclose the Ketosynthase family 3 (KS3) domain; the sequence is EDDIAIIGVG…GANCCIILSE (440 aa). Residues Cys-184, His-325, and His-363 each act as for beta-ketoacyl synthase activity in the active site. Positions 636-669 are acyl/malonyl transferase; the sequence is GIEASFIVGHSLGEISAAHCSGMIDLETLCYIIY. Ser-646 functions as the For acyl/malonyl transferase activity in the catalytic mechanism. Residues 930 to 1054 are N-terminal hotdog fold; it reads PPITILGNES…GNFHISNNLF (125 aa). The PKS/mFAS DH domain occupies 930–1220; that stretch reads PPITILGNES…SKSLTPIQDP (291 aa). The active-site Proton acceptor; for dehydratase activity is the His-964. Residues 1071–1220 form a C-terminal hotdog fold region; that stretch reads NYSLIERDDL…SKSLTPIQDP (150 aa). Residue Asp-1134 is the Proton donor; for dehydratase activity of the active site. Positions 2410–2485 constitute a Carrier domain; the sequence is ESNKGIDGLL…NQLIKFLNKK (76 aa). The residue at position 2447 (Ser-2447) is an O-(pantetheine 4'-phosphoryl)serine.

It depends on pantetheine 4'-phosphate as a cofactor.

Its function is as follows. Probable polyketide synthase. This is Probable polyketide synthase 10 (pks10) from Dictyostelium discoideum (Social amoeba).